A 518-amino-acid polypeptide reads, in one-letter code: Glutamate--cysteine ligase (518 aa).

This sequence belongs to the glutamate--cysteine ligase type 1 family. Type 1 subfamily.

It carries out the reaction L-cysteine + L-glutamate + ATP = gamma-L-glutamyl-L-cysteine + ADP + phosphate + H(+). Its pathway is sulfur metabolism; glutathione biosynthesis; glutathione from L-cysteine and L-glutamate: step 1/2. In Escherichia coli O127:H6 (strain E2348/69 / EPEC), this protein is Glutamate--cysteine ligase.